Here is a 99-residue protein sequence, read N- to C-terminus: Large ribosomal subunit protein uL23 (99 aa).

Belongs to the universal ribosomal protein uL23 family. As to quaternary structure, part of the 50S ribosomal subunit. Contacts protein L29, and trigger factor when it is bound to the ribosome.

Functionally, one of the early assembly proteins it binds 23S rRNA. One of the proteins that surrounds the polypeptide exit tunnel on the outside of the ribosome. Forms the main docking site for trigger factor binding to the ribosome. The chain is Large ribosomal subunit protein uL23 from Pseudomonas fluorescens (strain SBW25).